The sequence spans 222 residues: ATP-dependent Clp protease proteolytic subunit 1 (222 aa).

The Nucleophile role is filled by S121. Residue H146 is part of the active site.

Belongs to the peptidase S14 family. As to quaternary structure, fourteen ClpP subunits assemble into 2 heptameric rings which stack back to back to give a disk-like structure with a central cavity, resembling the structure of eukaryotic proteasomes.

Its subcellular location is the cytoplasm. The catalysed reaction is Hydrolysis of proteins to small peptides in the presence of ATP and magnesium. alpha-casein is the usual test substrate. In the absence of ATP, only oligopeptides shorter than five residues are hydrolyzed (such as succinyl-Leu-Tyr-|-NHMec, and Leu-Tyr-Leu-|-Tyr-Trp, in which cleavage of the -Tyr-|-Leu- and -Tyr-|-Trp bonds also occurs).. In terms of biological role, cleaves peptides in various proteins in a process that requires ATP hydrolysis. Has a chymotrypsin-like activity. Plays a major role in the degradation of misfolded proteins. The protein is ATP-dependent Clp protease proteolytic subunit 1 of Thermobifida fusca (strain YX).